Here is a 159-residue protein sequence, read N- to C-terminus: Small ribosomal subunit protein bS16 (159 aa).

Low complexity predominate over residues Gly102–Ala119. The interval Gly102 to Ala159 is disordered. Acidic residues predominate over residues Glu120–Leu129. Low complexity predominate over residues Ser130–Glu145.

This sequence belongs to the bacterial ribosomal protein bS16 family.

This Synechococcus sp. (strain JA-2-3B'a(2-13)) (Cyanobacteria bacterium Yellowstone B-Prime) protein is Small ribosomal subunit protein bS16.